We begin with the raw amino-acid sequence, 157 residues long: ATP synthase subunit b (157 aa).

The chain crosses the membrane as a helical span at residues 7–29; sequence MFGQLIMFTMFTWFCMKFVWPPI.

It belongs to the ATPase B chain family. As to quaternary structure, F-type ATPases have 2 components, F(1) - the catalytic core - and F(0) - the membrane proton channel. F(1) has five subunits: alpha(3), beta(3), gamma(1), delta(1), epsilon(1). F(0) has three main subunits: a(1), b(2) and c(10-14). The alpha and beta chains form an alternating ring which encloses part of the gamma chain. F(1) is attached to F(0) by a central stalk formed by the gamma and epsilon chains, while a peripheral stalk is formed by the delta and b chains.

The protein localises to the cell inner membrane. In terms of biological role, f(1)F(0) ATP synthase produces ATP from ADP in the presence of a proton or sodium gradient. F-type ATPases consist of two structural domains, F(1) containing the extramembraneous catalytic core and F(0) containing the membrane proton channel, linked together by a central stalk and a peripheral stalk. During catalysis, ATP synthesis in the catalytic domain of F(1) is coupled via a rotary mechanism of the central stalk subunits to proton translocation. Its function is as follows. Component of the F(0) channel, it forms part of the peripheral stalk, linking F(1) to F(0). This Ruthia magnifica subsp. Calyptogena magnifica protein is ATP synthase subunit b.